Here is a 544-residue protein sequence, read N- to C-terminus: Chaperonin GroEL (544 aa).

ATP-binding positions include 30–33 (TLGP), Lys-51, 87–91 (DGTTT), Gly-415, and Asp-495.

It belongs to the chaperonin (HSP60) family. As to quaternary structure, forms a cylinder of 14 subunits composed of two heptameric rings stacked back-to-back. Interacts with the co-chaperonin GroES.

It localises to the cytoplasm. The enzyme catalyses ATP + H2O + a folded polypeptide = ADP + phosphate + an unfolded polypeptide.. Its function is as follows. Together with its co-chaperonin GroES, plays an essential role in assisting protein folding. The GroEL-GroES system forms a nano-cage that allows encapsulation of the non-native substrate proteins and provides a physical environment optimized to promote and accelerate protein folding. In Neisseria meningitidis serogroup B (strain ATCC BAA-335 / MC58), this protein is Chaperonin GroEL.